A 157-amino-acid polypeptide reads, in one-letter code: 2-C-methyl-D-erythritol 2,4-cyclodiphosphate synthase (157 aa).

Aspartate 8 and histidine 10 together coordinate a divalent metal cation. Residues 8 to 10 and 34 to 35 each bind 4-CDP-2-C-methyl-D-erythritol 2-phosphate; these read DVH and HS. Histidine 42 is an a divalent metal cation binding site. 4-CDP-2-C-methyl-D-erythritol 2-phosphate-binding positions include 56 to 58, 61 to 65, 100 to 106, 132 to 135, phenylalanine 139, and arginine 142; these read DIG, FPDTD, AQAPKMA, and TTTE.

It belongs to the IspF family. Homotrimer. The cofactor is a divalent metal cation.

It catalyses the reaction 4-CDP-2-C-methyl-D-erythritol 2-phosphate = 2-C-methyl-D-erythritol 2,4-cyclic diphosphate + CMP. It participates in isoprenoid biosynthesis; isopentenyl diphosphate biosynthesis via DXP pathway; isopentenyl diphosphate from 1-deoxy-D-xylulose 5-phosphate: step 4/6. In terms of biological role, involved in the biosynthesis of isopentenyl diphosphate (IPP) and dimethylallyl diphosphate (DMAPP), two major building blocks of isoprenoid compounds. Catalyzes the conversion of 4-diphosphocytidyl-2-C-methyl-D-erythritol 2-phosphate (CDP-ME2P) to 2-C-methyl-D-erythritol 2,4-cyclodiphosphate (ME-CPP) with a corresponding release of cytidine 5-monophosphate (CMP). The sequence is that of 2-C-methyl-D-erythritol 2,4-cyclodiphosphate synthase from Pseudomonas aeruginosa (strain UCBPP-PA14).